Reading from the N-terminus, the 70-residue chain is DNA-directed RNA polymerase subunit epsilon (70 aa).

The protein belongs to the RNA polymerase subunit epsilon family. In terms of assembly, RNAP is composed of a core of 2 alpha, a beta and a beta' subunit. The core is associated with a delta subunit, and at least one of epsilon or omega. When a sigma factor is associated with the core the holoenzyme is formed, which can initiate transcription.

It catalyses the reaction RNA(n) + a ribonucleoside 5'-triphosphate = RNA(n+1) + diphosphate. Functionally, a non-essential component of RNA polymerase (RNAP). In Bacillus cereus (strain Q1), this protein is DNA-directed RNA polymerase subunit epsilon.